The following is a 956-amino-acid chain: RNA-binding protein 44 (956 aa).

A disordered region spans residues 301–321 (DNTQNNQNQSYNPTEENDHNV). Residues 750–824 (SLLCITCLPG…HAVQVVHLSG (75 aa)) form the RRM domain. The tract at residues 831–855 (KPSDLSHSASESHKEDTAGDELRTK) is disordered. The segment covering 840-854 (SESHKEDTAGDELRT) has biased composition (basic and acidic residues).

It localises to the cytoplasm. Component of intercellular bridges during meiosis. Intercellular bridges are evolutionarily conserved structures that connect differentiating germ cells. Not required for fertility. The polypeptide is RNA-binding protein 44 (rbm44) (Danio rerio (Zebrafish)).